Consider the following 1213-residue polypeptide: Hybrid signal transduction histidine kinase K (1213 aa).

4 disordered regions span residues Met1–Asn37, Asn98–Ser189, Asn279–Arg392, and Thr495–Asn565. Composition is skewed to low complexity over residues Asn98–Gln162, Ser171–Ser189, Asn279–Ala331, Asn339–Asn371, Gln498–Gln511, and Gln522–Asn565. Transmembrane regions (helical) follow at residues Ile600 to Ile618, Leu628 to Trp648, Ile652 to Ile672, Thr676 to Ile696, Ile729 to Gly749, and Ile768 to Ile788. The region spanning Thr822–Glu1052 is the Histidine kinase domain. A Phosphohistidine; by autocatalysis modification is found at His825. Positions Lys1076–Ile1199 constitute a Response regulatory domain. A 4-aspartylphosphate modification is found at Asp1125.

Activation probably requires transfer of a phosphate group between a histidine in the kinase core (transmitter) domain and an aspartate of the receiver domain.

It localises to the nucleus membrane. The catalysed reaction is ATP + protein L-histidine = ADP + protein N-phospho-L-histidine.. In terms of biological role, involved in a signal transduction pathway that regulates morphogenesis and controls entry into the culmination stage. May act via the regA pathway, being activated by a morphogenesis-stimulated ligand, reducing phosphodiesterase regA levels and allowing cAMP level to rise to promote the culmination stage. This protein probably undergoes an ATP-dependent autophosphorylation at a conserved histidine residue in the kinase core, and a phosphoryl group is then transferred to a conserved aspartate residue in the receiver domain. This is Hybrid signal transduction histidine kinase K (dhkK) from Dictyostelium discoideum (Social amoeba).